A 463-amino-acid chain; its full sequence is Calcitonin gene-related peptide type 1 receptor (463 aa).

Positions 1-22 (MDKKHILCFLVLLPLNMALISA) are cleaved as a signal peptide. Residues 23–138 (ESEEGVNQTD…STHEKVKTAL (116 aa)) lie on the Extracellular side of the membrane. Residues Asn29, Asn65, Asn117, Asn122, Asn127, and Asn128 are each glycosylated (N-linked (GlcNAc...) asparagine). Intrachain disulfides connect Cys47/Cys73, Cys64/Cys104, and Cys87/Cys126. A helical membrane pass occupies residues 139 to 163 (NLFYLTIIGHGLSIASLIISLIIFF). Residues 164 to 174 (YFKSLSCQRIT) lie on the Cytoplasmic side of the membrane. A helical membrane pass occupies residues 175 to 197 (LHKNLFFSFICNSIVTIIHLTAV). Over 198-208 (ANNQALVATNP) the chain is Extracellular. The chain crosses the membrane as a helical span at residues 209–237 (VSCKVSQFIHLYLMGCNYFWMLCEGVYLH). Residues 238-251 (TLIVVAVFAEKQHL) lie on the Cytoplasmic side of the membrane. Residues 252-272 (MWYYFLGWGFPLLPACIHAIA) form a helical membrane-spanning segment. Residues 273–288 (RSLYYNDNCWISSDTH) are Extracellular-facing. The interval 287-288 (TH) is required for RAMP3 interaction. Residues 289–313 (LLYIIHGPICAALLVNLFFLLNIVR) form a helical membrane-spanning segment. The Cytoplasmic portion of the chain corresponds to 314-328 (VLITKLKVTHQVESN). A helical membrane pass occupies residues 329-350 (LYMKAVRATLILVPLLGIEFVL). Residues 351-365 (FPWRPEGKVAEEVYD) lie on the Extracellular side of the membrane. The chain crosses the membrane as a helical span at residues 366–386 (YVMHILMHFQGLLVATIFCFF). Residues 387 to 463 (NGEVQAILRR…KSENMYDLVM (77 aa)) are Cytoplasmic-facing. Phosphoserine is present on residues Ser419 and Ser444.

Belongs to the G-protein coupled receptor 2 family. In terms of assembly, heterodimer of CALCRL and RAMP1; the receptor complex functions as CGRP receptor. Heterodimer of CALCRL and RAMP2 or CALCRL and RAMP3; the complexes function as adrenomedullin receptor. In terms of tissue distribution, expressed predominantly in the lung, thymus, heart and brain.

It is found in the cell membrane. Its function is as follows. G protein-coupled receptor which specificity is determined by its interaction with receptor-activity-modifying proteins (RAMPs). Together with RAMP1, form the receptor complex for calcitonin-gene-related peptides CALCA/CGRP1 and CALCB/CGRP2. Together with RAMP2 or RAMP3, function as receptor complexes for adrenomedullin (ADM and ADM2). Ligand binding causes a conformation change that triggers signaling via guanine nucleotide-binding proteins (G proteins) and modulates the activity of downstream effectors. Activates cAMP-dependent pathway. The polypeptide is Calcitonin gene-related peptide type 1 receptor (Mus musculus (Mouse)).